The following is a 407-amino-acid chain: Serine hydroxymethyltransferase (407 aa).

(6S)-5,6,7,8-tetrahydrofolate contacts are provided by residues Leu-117 and 121 to 123 (GHL). Lys-226 carries the post-translational modification N6-(pyridoxal phosphate)lysine. (6S)-5,6,7,8-tetrahydrofolate is bound at residue Glu-242.

It belongs to the SHMT family. Homodimer. Pyridoxal 5'-phosphate serves as cofactor.

It is found in the cytoplasm. It catalyses the reaction (6R)-5,10-methylene-5,6,7,8-tetrahydrofolate + glycine + H2O = (6S)-5,6,7,8-tetrahydrofolate + L-serine. The protein operates within one-carbon metabolism; tetrahydrofolate interconversion. Its pathway is amino-acid biosynthesis; glycine biosynthesis; glycine from L-serine: step 1/1. Catalyzes the reversible interconversion of serine and glycine with tetrahydrofolate (THF) serving as the one-carbon carrier. This reaction serves as the major source of one-carbon groups required for the biosynthesis of purines, thymidylate, methionine, and other important biomolecules. Also exhibits THF-independent aldolase activity toward beta-hydroxyamino acids, producing glycine and aldehydes, via a retro-aldol mechanism. This chain is Serine hydroxymethyltransferase, found in Thermus thermophilus (strain ATCC BAA-163 / DSM 7039 / HB27).